The primary structure comprises 121 residues: MIYPQTMLTVADNTGARKIMCIRVLGGNRKYAKIGDTIIGVVKEAIPNMPIKRSDIVRAIVVRTSKTIRRPDGMYIRFDDNAAVIVNLDNNPRGTRVFGPVAREIRDKNFSKIVSLAPEVL.

This sequence belongs to the universal ribosomal protein uL14 family. Part of the 50S ribosomal subunit.

It localises to the plastid. The protein localises to the chloroplast. In terms of biological role, binds to 23S rRNA. The polypeptide is Large ribosomal subunit protein uL14c (Trieres chinensis (Marine centric diatom)).